The primary structure comprises 598 residues: Aspartate--tRNA(Asp/Asn) ligase (598 aa).

L-aspartate is bound at residue E172. The segment at 196-199 (QLFK) is aspartate. R218 is a binding site for L-aspartate. Residues 218–220 (RDE) and Q227 each bind ATP. H454 provides a ligand contact to L-aspartate. E488 serves as a coordination point for ATP. R495 provides a ligand contact to L-aspartate. Position 540-543 (540-543 (GLDR)) interacts with ATP.

It belongs to the class-II aminoacyl-tRNA synthetase family. Type 1 subfamily. In terms of assembly, homodimer.

The protein resides in the cytoplasm. It catalyses the reaction tRNA(Asx) + L-aspartate + ATP = L-aspartyl-tRNA(Asx) + AMP + diphosphate. Its function is as follows. Aspartyl-tRNA synthetase with relaxed tRNA specificity since it is able to aspartylate not only its cognate tRNA(Asp) but also tRNA(Asn). Reaction proceeds in two steps: L-aspartate is first activated by ATP to form Asp-AMP and then transferred to the acceptor end of tRNA(Asp/Asn). The polypeptide is Aspartate--tRNA(Asp/Asn) ligase (Leptothrix cholodnii (strain ATCC 51168 / LMG 8142 / SP-6) (Leptothrix discophora (strain SP-6))).